The following is a 1337-amino-acid chain: Sister chromatid cohesion protein PDS5 homolog A (1337 aa).

Position 1 is an N-acetylmethionine (Met-1). One copy of the HEAT repeat lies at 393–429 (ALVNDQLLGFVRERTLDKRWRVRKEAMMGLAQLYKKY). A Phosphoserine modification is found at Ser-1097. An N6-acetyllysine modification is found at Lys-1146. The interval 1150–1337 (ATGRKPYVRS…PAERQIDLQR (188 aa)) is disordered. A compositionally biased stretch (polar residues) spans 1159-1180 (STGTETGSNINVNSELNPSTGN). The residue at position 1195 (Ser-1195) is a Phosphoserine. Thr-1208 carries the phosphothreonine modification. At Lys-1211 the chain carries N6-acetyllysine. The segment covering 1223–1233 (SDQATQGNISS) has biased composition (polar residues). At Lys-1290 the chain carries N6-acetyllysine. The residue at position 1305 (Ser-1305) is a Phosphoserine. Residues 1321 to 1337 (DLAKKAAPAERQIDLQR) are compositionally biased toward basic and acidic residues.

It belongs to the PDS5 family. As to quaternary structure, interacts with the cohesin complex. Interacts with WAPL (via FGF motifs) or CDCA5 (via the FGF motif); the interaction is direct, cohesin-dependent and competitive. Interacts with SMC3. Interacts with TP63. As to expression, highest level in colon. Low levels in lung, ovary, breast and kidney. Reduced level in renal tumor tissue. Isoform 2 is expressed in kidney.

The protein localises to the nucleus. Functionally, probable regulator of sister chromatid cohesion in mitosis which may stabilize cohesin complex association with chromatin. May couple sister chromatid cohesion during mitosis to DNA replication. Cohesion ensures that chromosome partitioning is accurate in both meiotic and mitotic cells and plays an important role in DNA repair. The sequence is that of Sister chromatid cohesion protein PDS5 homolog A from Homo sapiens (Human).